Reading from the N-terminus, the 488-residue chain is Envelope glycoprotein gp62 (488 aa).

Residues methionine 1–glycine 20 form the signal peptide. At aspartate 21–alanine 442 the chain is on the extracellular side. N-linked (GlcNAc...) asparagine; by host glycans are attached at residues asparagine 140 and asparagine 222. The CXXC signature appears at cysteine 225–cysteine 228. 3 disulfides stabilise this stretch: cysteine 225/cysteine 228, cysteine 225/cysteine 401, and cysteine 393/cysteine 400. Residues asparagine 244 and asparagine 272 are each glycosylated (N-linked (GlcNAc...) asparagine; by host). The segment at alanine 313–glycine 333 is fusion peptide. 2 coiled-coil regions span residues alanine 341–tryptophan 387 and glutamine 397–leucine 429. The tract at residues alanine 376–leucine 392 is immunosuppression. A CX6CC motif is present at residues cysteine 393 to cysteine 401. The N-linked (GlcNAc...) asparagine; by host glycan is linked to asparagine 404. Residues leucine 443–isoleucine 463 traverse the membrane as a helical segment. A lipid anchor (S-palmitoyl cysteine; by host) is attached at cysteine 462. Residues leucine 464–leucine 488 are Cytoplasmic-facing.

In terms of assembly, the mature envelope protein (Env) consists of a trimer of SU-TM heterodimers attached by a labile interchain disulfide bond. Post-translationally, specific enzymatic cleavages in vivo yield mature proteins. Envelope glycoproteins are synthesized as an inactive precursor that is N-glycosylated and processed likely by host cell furin or by a furin-like protease in the Golgi to yield the mature SU and TM proteins. The cleavage site between SU and TM requires the minimal sequence [KR]-X-[KR]-R. In terms of processing, the CXXC motif is highly conserved across a broad range of retroviral envelope proteins. It is thought to participate in the formation of a labile disulfide bond possibly with the CX6CC motif present in the transmembrane protein. Isomerization of the intersubunit disulfide bond to an SU intrachain disulfide bond is thought to occur upon receptor recognition in order to allow membrane fusion. The transmembrane protein is palmitoylated.

It is found in the virion membrane. It localises to the host cell membrane. Its function is as follows. The surface protein (SU) attaches the virus to the host cell by binding to its receptor. This interaction triggers the refolding of the transmembrane protein (TM) and is thought to activate its fusogenic potential by unmasking its fusion peptide. Fusion occurs at the host cell plasma membrane. In terms of biological role, the transmembrane protein (TM) acts as a class I viral fusion protein. Under the current model, the protein has at least 3 conformational states: pre-fusion native state, pre-hairpin intermediate state, and post-fusion hairpin state. During viral and target cell membrane fusion, the coiled coil regions (heptad repeats) assume a trimer-of-hairpins structure, positioning the fusion peptide in close proximity to the C-terminal region of the ectodomain. The formation of this structure appears to drive apposition and subsequent fusion of viral and target cell membranes. Membranes fusion leads to delivery of the nucleocapsid into the cytoplasm. The sequence is that of Envelope glycoprotein gp62 (env) from Human T-cell leukemia virus 1 (isolate Caribbea CH subtype A) (HTLV-1).